A 786-amino-acid polypeptide reads, in one-letter code: Signal transducer and activator of transcription 5B (786 aa).

Tyr-90 carries the phosphotyrosine modification. A Phosphoserine modification is found at Ser-128. The SH2 domain occupies 589-686 (WNDGAILGFV…EVYSKYYTPV (98 aa)). Residues Tyr-682 and Tyr-699 each carry the phosphotyrosine modification.

It belongs to the transcription factor STAT family. Upon activation, forms a homodimer or a heterodimer with a related family member. Binds NR3C1. Interacts with NCOA1. Interacts with SOCS7. Interacts (via SH2 domain) with INSR. Interacts with CPEB3; this inhibits STAT5B-mediated transcriptional activation. In terms of processing, tyrosine phosphorylated in response to signaling via activated KIT, resulting in translocation to the nucleus. Tyrosine phosphorylated in response to signaling via activated FLT3; wild-type FLT3 results in much weaker phosphorylation than constitutively activated mutant FLT3. Alternatively, can be phosphorylated by JAK2. Phosphorylation at Tyr-699 by PTK6 or HCK leads to an increase of its transcriptional activity. As to expression, in the virgin, found in most tissues. Particularly abundant in muscle tissue of virgin and lactating females, and of males.

It localises to the cytoplasm. It is found in the nucleus. Functionally, carries out a dual function: signal transduction and activation of transcription. Mediates cellular responses to the cytokine KITLG/SCF and other growth factors. Binds to the GAS element and activates PRL-induced transcription. Positively regulates hematopoietic/erythroid differentiation. This chain is Signal transducer and activator of transcription 5B (Stat5b), found in Mus musculus (Mouse).